The following is an 81-amino-acid chain: Trefoil factor 3 (81 aa).

The N-terminal stretch at 1 to 23 (MEARTFWLLVVAVLALGSSSSTG) is a signal peptide. The P-type domain maps to 31–74 (NQCAVPAKDRVDCGYPEVTPEQCNNRGCCFDSSIHGVPWCFKPL). Cystine bridges form between Cys33–Cys59, Cys43–Cys58, and Cys53–Cys70.

Monomer. Homodimer; disulfide-linked.

The protein localises to the secreted. Its subcellular location is the extracellular space. The protein resides in the extracellular matrix. It localises to the cytoplasm. Involved in the maintenance and repair of the intestinal mucosa. Promotes the mobility of epithelial cells in healing processes (motogen). This is Trefoil factor 3 (TFF3) from Bos taurus (Bovine).